A 248-amino-acid polypeptide reads, in one-letter code: Mannose-binding protein C (248 aa).

An N-terminal signal peptide occupies residues 1–20; sequence MSLFPSLPLLLLSVVAASYS. Residues 42–99 enclose the Collagen-like domain; the sequence is GINGFPGKDGRDGTKGEKGEPGQGLRGLQGPPGKLGPPGNPGPSGSPGPKGQKGDPGK. Residues 43–111 form a disordered region; it reads INGFPGKDGR…DCDSSLAASE (69 aa). Pro-47 is subject to 4-hydroxyproline. Basic and acidic residues predominate over residues 49–61; that stretch reads KDGRDGTKGEKGE. A 4-hydroxyproline mark is found at Pro-73, Pro-79, Pro-82, and Pro-88. Over residues 75–87 the composition is skewed to pro residues; it reads KLGPPGNPGPSGS. The span at 93-102 shows a compositional bias: basic and acidic residues; sequence QKGDPGKSPD. A coiled-coil region spans residues 112 to 130; it reads RKALQTEMARIKKWLTFSL. The C-type lectin domain maps to 134–245; the sequence is VGNKFFLTNG…CSSSHLAVCE (112 aa). 2 disulfides stabilise this stretch: Cys-155-Cys-244 and Cys-222-Cys-236.

In terms of assembly, oligomeric complex of 3 or more homotrimers. Interacts with MASP1 and MASP2. Interacts with MEP1A and MEP1B and may inhibit their catalytic activity. In terms of processing, hydroxylation on proline residues within the sequence motif, GXPG, is most likely to be 4-hydroxy as this fits the requirement for 4-hydroxylation in vertebrates.

It localises to the secreted. Functionally, calcium-dependent lectin involved in innate immune defense. Binds mannose, fucose and N-acetylglucosamine on different microorganisms and activates the lectin complement pathway. Binds to late apoptotic cells, as well as to apoptotic blebs and to necrotic cells, but not to early apoptotic cells, facilitating their uptake by macrophages. This chain is Mannose-binding protein C (MBL2), found in Pongo pygmaeus (Bornean orangutan).